The chain runs to 584 residues: Alkaline nuclease (584 aa).

The disordered stretch occupies residues 409–429 (GGGADHHLRGSPGDSPPPIPF).

The protein belongs to the herpesviridae alkaline nuclease family. As to quaternary structure, interacts with major DNA-binding protein; this interaction increases the nuclease processivity of the alkaline exonuclease.

The protein resides in the host nucleus. It is found in the host cytoplasm. Its function is as follows. Plays a role in processing non linear or branched viral DNA intermediates in order to promote the production of mature packaged unit-length linear progeny viral DNA molecules. Exhibits endonuclease and exonuclease activities and accepts both double-stranded and single-stranded DNA as substrate. Exonuclease digestion of DNA is in the 5'-&gt; 3' direction and the products are 5'-monophosphate nucleosides. Additionally, forms a recombinase with the major DNA-binding protein, which displays strand exchange activity. The chain is Alkaline nuclease (UL98) from Homo sapiens (Human).